A 264-amino-acid polypeptide reads, in one-letter code: Glutamate racemase (264 aa).

Residues 10 to 11 (DS) and 42 to 43 (YG) contribute to the substrate site. Residue Cys-73 is the Proton donor/acceptor of the active site. Position 74 to 75 (74 to 75 (NT)) interacts with substrate. Cys-183 serves as the catalytic Proton donor/acceptor. Substrate is bound at residue 184 to 185 (TH).

This sequence belongs to the aspartate/glutamate racemases family.

It carries out the reaction L-glutamate = D-glutamate. It functions in the pathway cell wall biogenesis; peptidoglycan biosynthesis. Its function is as follows. Provides the (R)-glutamate required for cell wall biosynthesis. This Streptococcus pyogenes serotype M18 (strain MGAS8232) protein is Glutamate racemase.